A 166-amino-acid polypeptide reads, in one-letter code: Putative 4-hydroxy-4-methyl-2-oxoglutarate aldolase 2 (166 aa).

Alanine 2 carries the N-acetylalanine modification. Substrate-binding positions include 81-84 (GGNP) and arginine 103. Aspartate 104 contacts a divalent metal cation.

This sequence belongs to the class II aldolase/RraA-like family. In terms of assembly, homotrimer. The cofactor is a divalent metal cation.

It catalyses the reaction 4-hydroxy-4-methyl-2-oxoglutarate = 2 pyruvate. It carries out the reaction oxaloacetate + H(+) = pyruvate + CO2. Functionally, catalyzes the aldol cleavage of 4-hydroxy-4-methyl-2-oxoglutarate (HMG) into 2 molecules of pyruvate. Also contains a secondary oxaloacetate (OAA) decarboxylase activity due to the common pyruvate enolate transition state formed following C-C bond cleavage in the retro-aldol and decarboxylation reactions. This chain is Putative 4-hydroxy-4-methyl-2-oxoglutarate aldolase 2, found in Arabidopsis thaliana (Mouse-ear cress).